The chain runs to 379 residues: Chaperone protein DnaJ (379 aa).

Positions 5–70 (DYYEVLGLSK…EKKAMYDQYG (66 aa)) constitute a J domain. Residues 136–214 (GCKKDIRIHT…CHGDGRVHKA (79 aa)) form a CR-type zinc finger. Residues cysteine 149, cysteine 152, cysteine 166, cysteine 169, cysteine 188, cysteine 191, cysteine 202, and cysteine 205 each coordinate Zn(2+). CXXCXGXG motif repeat units lie at residues 149-156 (CDTCHGTG), 166-173 (CSHCHGSG), 188-195 (CPSCHGTG), and 202-209 (CRSCHGDG).

This sequence belongs to the DnaJ family. Homodimer. Zn(2+) is required as a cofactor.

It is found in the cytoplasm. Functionally, participates actively in the response to hyperosmotic and heat shock by preventing the aggregation of stress-denatured proteins and by disaggregating proteins, also in an autonomous, DnaK-independent fashion. Unfolded proteins bind initially to DnaJ; upon interaction with the DnaJ-bound protein, DnaK hydrolyzes its bound ATP, resulting in the formation of a stable complex. GrpE releases ADP from DnaK; ATP binding to DnaK triggers the release of the substrate protein, thus completing the reaction cycle. Several rounds of ATP-dependent interactions between DnaJ, DnaK and GrpE are required for fully efficient folding. Also involved, together with DnaK and GrpE, in the DNA replication of plasmids through activation of initiation proteins. This is Chaperone protein DnaJ from Mannheimia haemolytica (Pasteurella haemolytica).